A 442-amino-acid polypeptide reads, in one-letter code: tRNA modification GTPase MnmE (442 aa).

(6S)-5-formyl-5,6,7,8-tetrahydrofolate contacts are provided by Arg24, Glu82, and Lys120. Positions 217 to 367 (GLHIVITGEP…LISLIKKKAE (151 aa)) constitute a TrmE-type G domain. GTP is bound by residues 227 to 232 (NVGKST), 246 to 252 (SEYAGTT), and 271 to 274 (DTAG). Ser231 contributes to the Mg(2+) binding site. Ser246 serves as a coordination point for K(+). Residue Thr252 participates in Mg(2+) binding. Lys442 is a (6S)-5-formyl-5,6,7,8-tetrahydrofolate binding site.

The protein belongs to the TRAFAC class TrmE-Era-EngA-EngB-Septin-like GTPase superfamily. TrmE GTPase family. Homodimer. Heterotetramer of two MnmE and two MnmG subunits. The cofactor is K(+).

It localises to the cytoplasm. Exhibits a very high intrinsic GTPase hydrolysis rate. Involved in the addition of a carboxymethylaminomethyl (cmnm) group at the wobble position (U34) of certain tRNAs, forming tRNA-cmnm(5)s(2)U34. This chain is tRNA modification GTPase MnmE, found in Wolbachia pipientis subsp. Culex pipiens (strain wPip).